The chain runs to 209 residues: Translation initiation factor IF-3 (209 aa).

The protein belongs to the IF-3 family. Monomer.

It is found in the cytoplasm. IF-3 binds to the 30S ribosomal subunit and shifts the equilibrium between 70S ribosomes and their 50S and 30S subunits in favor of the free subunits, thus enhancing the availability of 30S subunits on which protein synthesis initiation begins. The sequence is that of Translation initiation factor IF-3 from Chlorobium phaeobacteroides (strain DSM 266 / SMG 266 / 2430).